The chain runs to 1632 residues: uncharacterized protein (1632 aa).

Over residues 1-15 (MSNNKQTAAPAATSN) the composition is skewed to polar residues. The segment at 1-23 (MSNNKQTAAPAATSNEKAENGAE) is disordered. Over 1 to 63 (MSNNKQTAAP…TKDAFKGKYR (63 aa)) the chain is Cytoplasmic. A helical transmembrane segment spans residues 64 to 86 (VFYGNGLHTSIMFGAGTAALDLM). At 87 to 1632 (TPGSFLPPFP…ESDGEEMSGE (1546 aa)) the chain is on the extracellular side. Asparagine 149 and asparagine 274 each carry an N-linked (GlcNAc...) asparagine; by host glycan. Positions 516–538 (ELSSQLGDTDTKKEQKEKRSKQG) are disordered. Asparagine 654, asparagine 719, and asparagine 797 each carry an N-linked (GlcNAc...) asparagine; by host glycan. The segment at 838 to 890 (IKGTKKSDDGDSKTDGSGDMEDDFTSLAKMTNRKRKAGGKDGPSKKKKKDGAD) is disordered. 2 stretches are compositionally biased toward basic and acidic residues: residues 842–853 (KKSDDGDSKTDG) and 875–890 (GGKDGPSKKKKKDGAD). N-linked (GlcNAc...) asparagine; by host glycosylation is found at asparagine 1012, asparagine 1031, asparagine 1261, asparagine 1339, asparagine 1511, and asparagine 1546. The interval 1603 to 1632 (PSAMDVDEDEDEDMDDESDDESDGEEMSGE) is disordered. The segment covering 1607–1632 (DVDEDEDEDMDDESDDESDGEEMSGE) has biased composition (acidic residues).

The protein resides in the host membrane. This is an uncharacterized protein from Ostreid herpesvirus 1 (isolate France) (OsHV-1).